Consider the following 20-residue polypeptide: U1-poneritoxin-Ni1a (20 aa).

Lys20 is subject to Lysine amide.

Belongs to the non-disulfide-bridged peptide (NDBP) superfamily. Medium-length antimicrobial peptide (group 3) family. Ponericin-W subfamily. Expressed by the venom gland.

Its subcellular location is the secreted. It is found in the target cell membrane. Functionally, has activity against Gram-positive bacteria. Has insecticidal and hemolytic activities. May act by disrupting the integrity of the bacterial cell membrane. The chain is U1-poneritoxin-Ni1a from Neoponera inversa (Ant).